The primary structure comprises 538 residues: Putative cysteine ligase BshC (538 aa).

Residues 460–483 (KINEQIELLEKMLKRNVEKKHEVQ) adopt a coiled-coil conformation.

It belongs to the BshC family.

In terms of biological role, involved in bacillithiol (BSH) biosynthesis. May catalyze the last step of the pathway, the addition of cysteine to glucosamine malate (GlcN-Mal) to generate BSH. This is Putative cysteine ligase BshC from Bacillus mycoides (strain KBAB4) (Bacillus weihenstephanensis).